The sequence spans 1037 residues: Guanine nucleotide-binding protein G(s) subunit alpha isoforms XLas (1037 aa).

Disordered stretches follow at residues 1–105 (MGVR…MPFE), 185–224 (APGG…EETM), 283–588 (SPSQ…TSGC), and 640–666 (PLAE…KKRS). Residues 33–46 (APGAAAPGAGPSPA) are compositionally biased toward low complexity. Residues 343 to 354 (PDKRERAERPPV) show a composition bias toward basic and acidic residues. Composition is skewed to low complexity over residues 361 to 408 (MEGA…GATP) and 416 to 521 (APAD…PASG). Over residues 553–565 (GKSESSRGRRVYY) the composition is skewed to basic and acidic residues. A compositionally biased stretch (acidic residues) spans 572–583 (SDDDSSGDESDD). Over residues 640-660 (PLAEKRRQMRKEALEKRAQKR) the composition is skewed to basic and acidic residues. Residues 641 to 667 (LAEKRRQMRKEALEKRAQKRAEKKRSK) are a coiled coil. One can recognise a G-alpha domain in the interval 682–1037 (CTHRLLLLGA…RMHLRQYELL (356 aa)). The interval 685-698 (RLLLLGAGESGKST) is G1 motif. Residue 690-698 (GAGESGKST) coordinates GTP. S697 lines the Mg(2+) pocket. A disordered region spans residues 711–734 (FNGEGGEEDPQAARSNSDGEKATK). Residues 730–756 (EKATKVQDIKNNLKEAIETIVAAMSNL) are a coiled coil. A G2 motif region spans residues 839–847 (DLLRCRVLT). Residues 840 to 847 (LLRCRVLT), 866 to 870 (DVGGQ), and 935 to 938 (NKQD) contribute to the GTP site. R844 is modified (ADP-ribosylarginine; by cholera toxin). Residue T847 participates in Mg(2+) binding. The G3 motif stretch occupies residues 862-871 (FHMFDVGGQR). Residues 931–938 (ILFLNKQD) are G4 motif. Phosphoserine is present on S995. The segment at 1007–1012 (TCAVDT) is G5 motif. A1009 contributes to the GTP binding site.

The protein belongs to the G-alpha family. G(s) subfamily. G proteins are composed of 3 units; alpha, beta and gamma. The alpha chain contains the guanine nucleotide binding site. Interacts through its N-terminal region with ALEX which is produced from the same locus in a different open reading frame. This interaction may inhibit its adenylyl cyclase-stimulating activity. Interacts with MAGED2.

The protein resides in the cell membrane. Its subcellular location is the apical cell membrane. The catalysed reaction is GTP + H2O = GDP + phosphate + H(+). Guanine nucleotide-binding proteins (G proteins) function as transducers in numerous signaling pathways controlled by G protein-coupled receptors (GPCRs). The alpha chain contains the guanine nucleotide binding site and alternates between an active, GTP-bound state and an inactive, GDP-bound state. Signaling by an activated GPCR promotes GDP release and GTP binding. The alpha subunit has a low GTPase activity that converts bound GTP to GDP, thereby terminating the signal. Both GDP release and GTP hydrolysis are modulated by numerous regulatory proteins. Signaling involves the activation of adenylyl cyclases, resulting in increased levels of the signaling molecule cAMP. GNAS functions downstream of several GPCRs, including beta-adrenergic receptors. XLas isoforms interact with the same set of receptors as Gnas isoforms. The chain is Guanine nucleotide-binding protein G(s) subunit alpha isoforms XLas (GNAS) from Homo sapiens (Human).